A 58-amino-acid chain; its full sequence is Large ribosomal subunit protein bL32c (58 aa).

The segment covering 1-19 (MAVPKKRKSKMKTRLRKAQ) has biased composition (basic residues). Positions 1-25 (MAVPKKRKSKMKTRLRKAQWKSEAS) are disordered.

This sequence belongs to the bacterial ribosomal protein bL32 family.

The protein localises to the plastid. It localises to the chloroplast. The protein is Large ribosomal subunit protein bL32c (rpl32) of Chlorella vulgaris (Green alga).